A 451-amino-acid polypeptide reads, in one-letter code: Phosphoglucosamine mutase (451 aa).

Serine 102 (phosphoserine intermediate) is an active-site residue. Residues serine 102, aspartate 243, aspartate 245, and aspartate 247 each contribute to the Mg(2+) site. Position 102 is a phosphoserine (serine 102).

Belongs to the phosphohexose mutase family. The cofactor is Mg(2+). Post-translationally, activated by phosphorylation.

The enzyme catalyses alpha-D-glucosamine 1-phosphate = D-glucosamine 6-phosphate. Catalyzes the conversion of glucosamine-6-phosphate to glucosamine-1-phosphate. The chain is Phosphoglucosamine mutase from Brucella anthropi (strain ATCC 49188 / DSM 6882 / CCUG 24695 / JCM 21032 / LMG 3331 / NBRC 15819 / NCTC 12168 / Alc 37) (Ochrobactrum anthropi).